An 803-amino-acid chain; its full sequence is Volume-regulated anion channel subunit LRRC8C (803 aa).

Residues 1–22 (MIPVTEFRQFSEQQPAFRVLKP) are Cytoplasmic-facing. Residues 23–48 (WWDVFTDYLSVAMLMIGVFGCTLQVM) form a helical membrane-spanning segment. Topologically, residues 49-124 (QDKIICLPKR…CYERALHWYA (76 aa)) are extracellular. Cystine bridges form between C54/C308 and C115/C293. The chain crosses the membrane as a helical span at residues 125 to 144 (KYFPYLVLIHTLVFMLCSNF). Residues 145–262 (WFKFPGSSSK…EEGDILYAMY (118 aa)) are Cytoplasmic-facing. Residues 177–206 (EVSGEDSEEKDNRKNNMNRSGTIQSGPEGN) form a disordered region. The span at 191 to 206 (NNMNRSGTIQSGPEGN) shows a compositional bias: polar residues. A phosphoserine mark is found at S212 and S215. The chain crosses the membrane as a helical span at residues 263–284 (VRQTVLKVIKFLIIIAYNSALV). Topologically, residues 285 to 314 (SKVQFTVDCNVDIQDMTGYKNFSCNHTMAH) are extracellular. Residues 315 to 339 (LFSKLSFCYLCFVSIYGLTCLYTLY) traverse the membrane as a helical segment. Residues 340–803 (WLFYRSLREY…SDVREQMKAD (464 aa)) lie on the Cytoplasmic side of the membrane. LRR repeat units lie at residues 409–420 (WTPDKLRQKLQT), 421–443 (NAHN…VFEI), 446–466 (LQSL…IAQL), 467–488 (DNLQ…ALSF), 490–513 (KENL…MYGL), 515–537 (NLEE…TLES), 541–563 (LKSL…VVDV), 566–586 (HLQK…NNLK), 588–611 (MTNL…VFSL), 613–635 (SLQE…SFQH), 637–659 (RKLT…IKKL), 660–682 (TSLE…LFLC), 684–705 (KIRY…IGVL), 706–728 (QSLQ…LYFC), 730–751 (KLKT…IGNL), 752–774 (LFLS…LGDC), and 776–799 (ALKR…VREQ).

This sequence belongs to the LRRC8 family. In terms of assembly, heterohexamer; oligomerizes with other LRRC8 proteins (LRRC8A, LRRC8B, LRRC8D and/or LRRC8E) to form a heterohexamer. Homoheptamer; inactive, likely because it is not targeted to the plasma membrane in the absence of LRRC8A. In vivo, the subunit composition may depend primarily on expression levels, and heterooligomeric channels containing various proportions of the different LRRC8 proteins may coexist. In terms of tissue distribution, expressed at very low levels in adipose tissue.

It is found in the cell membrane. It localises to the endoplasmic reticulum membrane. It catalyses the reaction chloride(in) = chloride(out). It carries out the reaction iodide(out) = iodide(in). The enzyme catalyses taurine(out) = taurine(in). The catalysed reaction is 2',3'-cGAMP(out) = 2',3'-cGAMP(in). Non-essential component of the volume-regulated anion channel (VRAC, also named VSOAC channel), an anion channel required to maintain a constant cell volume in response to extracellular or intracellular osmotic changes. The VRAC channel conducts iodide better than chloride and can also conduct organic osmolytes like taurine. Plays a redundant role in the efflux of amino acids, such as aspartate and glutamate, in response to osmotic stress. The VRAC channel also mediates transport of immunoreactive cyclic dinucleotide GMP-AMP (2'-3'-cGAMP), an immune messenger produced in response to DNA virus in the cytosol. Channel activity requires LRRC8A plus at least one other family member (LRRC8B, LRRC8C, LRRC8D or LRRC8E); channel characteristics depend on the precise subunit composition. May play a role in adipogenesis. This is Volume-regulated anion channel subunit LRRC8C from Mus musculus (Mouse).